Reading from the N-terminus, the 166-residue chain is Mitochondrial inner membrane protease subunit 1 (166 aa).

Catalysis depends on residues S40 and K83.

This sequence belongs to the peptidase S26 family. IMP1 subfamily. In terms of assembly, heterodimer of 2 subunits, IMMPL1 and IMMPL2.

The protein localises to the mitochondrion inner membrane. Catalyzes the removal of transit peptides required for the targeting of proteins from the mitochondrial matrix, across the inner membrane, into the inter-membrane space. Known to process the nuclear encoded protein DIABLO. The protein is Mitochondrial inner membrane protease subunit 1 (Immp1l) of Mus musculus (Mouse).